Reading from the N-terminus, the 156-residue chain is Large ribosomal subunit protein uL15 (156 aa).

The tract at residues 1 to 56 is disordered; that stretch reads MDLSNLKPAEGATQAGQRLGRGEGSGRGGHSSTRGTKGQSSRSGSGTRPIWFEGGQ.

The protein belongs to the universal ribosomal protein uL15 family. Part of the 50S ribosomal subunit.

In terms of biological role, binds to the 23S rRNA. The sequence is that of Large ribosomal subunit protein uL15 from Salinibacter ruber (strain DSM 13855 / M31).